The sequence spans 248 residues: Phosphoribosyl isomerase A (248 aa).

The active-site Proton acceptor is Asp-14. Asp-133 functions as the Proton donor in the catalytic mechanism.

The protein belongs to the HisA/HisF family.

It localises to the cytoplasm. It carries out the reaction 1-(5-phospho-beta-D-ribosyl)-5-[(5-phospho-beta-D-ribosylamino)methylideneamino]imidazole-4-carboxamide = 5-[(5-phospho-1-deoxy-D-ribulos-1-ylimino)methylamino]-1-(5-phospho-beta-D-ribosyl)imidazole-4-carboxamide. It catalyses the reaction N-(5-phospho-beta-D-ribosyl)anthranilate = 1-(2-carboxyphenylamino)-1-deoxy-D-ribulose 5-phosphate. It participates in amino-acid biosynthesis; L-histidine biosynthesis; L-histidine from 5-phospho-alpha-D-ribose 1-diphosphate: step 4/9. The protein operates within amino-acid biosynthesis; L-tryptophan biosynthesis; L-tryptophan from chorismate: step 3/5. Its function is as follows. Involved in both the histidine and tryptophan biosynthetic pathways. The sequence is that of Phosphoribosyl isomerase A from Mycobacterium sp. (strain JLS).